Consider the following 186-residue polypeptide: ATP synthase subunit delta (186 aa).

Belongs to the ATPase delta chain family. F-type ATPases have 2 components, F(1) - the catalytic core - and F(0) - the membrane proton channel. F(1) has five subunits: alpha(3), beta(3), gamma(1), delta(1), epsilon(1). F(0) has three main subunits: a(1), b(2) and c(10-14). The alpha and beta chains form an alternating ring which encloses part of the gamma chain. F(1) is attached to F(0) by a central stalk formed by the gamma and epsilon chains, while a peripheral stalk is formed by the delta and b chains.

It localises to the cell inner membrane. Functionally, f(1)F(0) ATP synthase produces ATP from ADP in the presence of a proton or sodium gradient. F-type ATPases consist of two structural domains, F(1) containing the extramembraneous catalytic core and F(0) containing the membrane proton channel, linked together by a central stalk and a peripheral stalk. During catalysis, ATP synthesis in the catalytic domain of F(1) is coupled via a rotary mechanism of the central stalk subunits to proton translocation. This protein is part of the stalk that links CF(0) to CF(1). It either transmits conformational changes from CF(0) to CF(1) or is implicated in proton conduction. The protein is ATP synthase subunit delta of Brucella melitensis biotype 2 (strain ATCC 23457).